Consider the following 401-residue polypeptide: Sorting nexin-4 (401 aa).

Residues 17 to 139 (FLQCLVTEPR…AFLENPNWNN (123 aa)) form the PX domain. 4 residues coordinate a 1,2-diacyl-sn-glycero-3-phospho-(1D-myo-inositol-3-phosphate): Arg60, Ser62, Lys86, and Arg105. Phosphoserine is present on Ser62. The stretch at 190-292 (ISNLEGSIQK…DVEALQEYSA (103 aa)) forms a coiled coil.

Belongs to the sorting nexin family.

The protein localises to the cytoplasm. Its subcellular location is the cytosol. It localises to the preautophagosomal structure membrane. It is found in the endosome membrane. Functionally, sorting nexin, involved in the separation or division of vacuoles throughout the entire life cycle of the cells. Involved in retrieval of late-Golgi SNAREs from post-Golgi endosomes to the trans-Golgi network, for cytoplasm to vacuole transport (Cvt), and autophagy of large cargos including mitophagy, pexophagy and glycophagy. The sequence is that of Sorting nexin-4 (snx4) from Schizosaccharomyces pombe (strain 972 / ATCC 24843) (Fission yeast).